The following is a 138-amino-acid chain: Basic phospholipase A2 B (138 aa).

A signal peptide spans 1-16 (MRALWIVAVLLLGVEG). Intrachain disulfides connect Cys42–Cys131, Cys44–Cys60, Cys59–Cys111, Cys65–Cys138, Cys66–Cys104, Cys73–Cys97, and Cys91–Cys102. Ca(2+) contacts are provided by Tyr43, Gly45, and Gly47. His63 is a catalytic residue. Ca(2+) is bound at residue Asp64. Asp105 is a catalytic residue.

This sequence belongs to the phospholipase A2 family. Group II subfamily. D49 sub-subfamily. Requires Ca(2+) as cofactor. In terms of tissue distribution, expressed by the venom gland.

It is found in the secreted. The catalysed reaction is a 1,2-diacyl-sn-glycero-3-phosphocholine + H2O = a 1-acyl-sn-glycero-3-phosphocholine + a fatty acid + H(+). In terms of biological role, snake venom phospholipase A2 (PLA2) that shows potent hemolytic activity, and exhibits medium anticoagulant effects by binding to factor Xa (F10) and inhibiting the prothrombinase activity (IC(50) is 90 nM). It is one of the few phospholipases A2 capable of hydrolyzing the phospholipids of E.coli membranes in the presence of a bactericidal/permeability-increasing protein (BPI) of neutrophils. PLA2 catalyzes the calcium-dependent hydrolysis of the 2-acyl groups in 3-sn-phosphoglycerides. The chain is Basic phospholipase A2 B from Gloydius halys (Chinese water mocassin).